A 552-amino-acid polypeptide reads, in one-letter code: Glutamine-dependent NAD(+) synthetase (552 aa).

The CN hydrolase domain occupies 5–245 (FRITLAQLNP…EAVVHVDLER (241 aa)). E45 functions as the Proton acceptor; for glutaminase activity in the catalytic mechanism. The For glutaminase activity role is filled by K113. Residue C149 is the Nucleophile; for glutaminase activity of the active site. Residues S175 and K181 each contribute to the L-glutamine site. The interval 275-552 (LQDYLRKSGF…PMVNRWRDQS (278 aa)) is ligase. An ATP-binding site is contributed by 290–297 (GLSGGIDS). N373 is a deamido-NAD(+) binding site. An ATP-binding site is contributed by T397. Residues E402 and K521 each contribute to the deamido-NAD(+) site.

It in the C-terminal section; belongs to the NAD synthetase family.

The catalysed reaction is deamido-NAD(+) + L-glutamine + ATP + H2O = L-glutamate + AMP + diphosphate + NAD(+) + H(+). It participates in cofactor biosynthesis; NAD(+) biosynthesis; NAD(+) from deamido-NAD(+) (L-Gln route): step 1/1. Functionally, catalyzes the ATP-dependent amidation of deamido-NAD to form NAD. Uses L-glutamine as a nitrogen source. The sequence is that of Glutamine-dependent NAD(+) synthetase from Rhodobacter capsulatus (Rhodopseudomonas capsulata).